Consider the following 717-residue polypeptide: MELLKKYPKFFQWLFLLIVFFSLCFAIEVPETYNFIRGQAEFIKDPNQSTYTLFGAEVRYYAFDVFWRLPPLLGWLPIWINDSLFFLMNEWMPMEFWNEDIQEFRTQPLLLQITRNLTSFMTFLIELIREILLGGVETIVSFSSWDWIDANPWAELPGLPWTIVTAGAVILGYKLSGKGLALFAGLVMIYISVFGQWKPSMQTLSFILVAAPLSFLFGLTFGVMAFKSKRVEKFLYPILLVMQTMPQYAVLVPAIVLFGIGDHAAVIITMVVAVPPMILLTLLGLRGIPSEVIEAGRMSGCNNWQLMTKVLIPTARRDILIGVNQVIMVCFSMAVISAFIGAKGLGFNLLLALNQLNIGLALEAGLCISLIAILLDKMSLAWANKQIDYFGNLTYFQRNKNILFFAAAVILGIIFSYLGSFYFKDGSNYLFEVPHNKGISTADFWNKGVDWIWDTFFHTLKIFNTWLIVDVLQPMRALYLRMPAVATLVLVIGAGYIIGGIRSALVVGGLTLFIALSPWWDRALVTLYMATFGVFISTIIGFTVGIISFQNKHTANFMLGVCDIFQTFPSFVYLIPVMMLFGVTDTSVLIAVIVYATIPATRYTIEGLRSVPEALHDAATMSGVNKVQRLLKIEFPLAFPHMMLGLNQTIVFALFMVIIGAFIGTEDLGQYILKALSDKKGAGIGLTLGLCVAFIGLIFDHLIRTWVGKRKKHLGIG.

A run of 17 helical transmembrane segments spans residues 10–30 (FFQW…IEVP), 69–89 (LPPL…FLMN), 120–140 (FMTF…ETIV), 153–173 (WAEL…ILGY), 175–195 (LSGK…SVFG), 206–226 (FILV…VMAF), 238–258 (ILLV…IVLF), 265–285 (AVII…LLGL), 319–339 (ILIG…ISAF), 355–375 (QLNI…AILL), 402–422 (ILFF…GSFY), 452–472 (IWDT…VDVL), 488–508 (LVLV…LVVG), 527–547 (LYMA…VGII), 574–594 (LIPV…AVIV), 643–663 (MLGL…GAFI), and 683–703 (GIGL…DHLI). The region spanning 200–379 (SMQTLSFILV…LIAILLDKMS (180 aa)) is the ABC transmembrane type-1 1 domain. The 181-residue stretch at 523–703 (ALVTLYMATF…FIGLIFDHLI (181 aa)) folds into the ABC transmembrane type-1 2 domain.

This sequence belongs to the binding-protein-dependent transport system permease family. As to quaternary structure, the complex is probably composed of two ATP-binding proteins (TmoW), two transmembrane proteins (TmoV) and a solute-binding protein (TmoX).

The protein resides in the cell inner membrane. Part of the ABC transporter complex TmoXWV involved in trimethylamine N-oxide (TMAO) import. Responsible for the translocation of the substrate across the membrane. This Pelagibacter ubique (strain HTCC1062) protein is Trimethylamine N-oxide transport system permease protein TmoV.